A 214-amino-acid polypeptide reads, in one-letter code: MRLRNIPGAEAALREYPTFVDNPLFYKGNWKERFGNNNPIHVEIGCGKGRFINTLAERHPDINFIAVELKAEVVLRAVQRTEYKAIPNLAFVQYDASKLTELFADHEISRIYLNFSDPWPKTRHAKRRLTYKSFLNTYRQVLVADGELHMKTDNENLFEFSLNQFAAERFQMRNITFDLHQSKLAADNVMTEYEERFSSRGQRIYRVEASCVIK.

Residues Glu-43, Glu-68, Asp-95, and Asp-117 each coordinate S-adenosyl-L-methionine. The active site involves Asp-117. Substrate contacts are provided by residues Lys-121, Asp-153, and 191–194 (TEYE).

Belongs to the class I-like SAM-binding methyltransferase superfamily. TrmB family.

The catalysed reaction is guanosine(46) in tRNA + S-adenosyl-L-methionine = N(7)-methylguanosine(46) in tRNA + S-adenosyl-L-homocysteine. The protein operates within tRNA modification; N(7)-methylguanine-tRNA biosynthesis. In terms of biological role, catalyzes the formation of N(7)-methylguanine at position 46 (m7G46) in tRNA. The chain is tRNA (guanine-N(7)-)-methyltransferase from Brevibacillus brevis (strain 47 / JCM 6285 / NBRC 100599).